Here is a 652-residue protein sequence, read N- to C-terminus: ATP-dependent zinc metalloprotease FtsH 1 (652 aa).

Residues 1–9 (MSDNKWLRN) are Cytoplasmic-facing. A helical membrane pass occupies residues 10 to 30 (GFVWMILIIAAIAVWVTFVQG). Topologically, residues 31–110 (GRGGATITTQ…QTHRASQWGN (80 aa)) are extracellular. Residues 111–131 (VLGTLTFLLPTLFLIGVIIFM) traverse the membrane as a helical segment. The Cytoplasmic segment spans residues 132-652 (MRQAQGTNNQ…VPHIKPQPAS (521 aa)). Position 203-210 (203-210 (GPPGTGKT)) interacts with ATP. A Zn(2+)-binding site is contributed by His425. Residue Glu426 is part of the active site. Positions 429 and 501 each coordinate Zn(2+). Residues 623–652 (IATPETARPDSPSEARPAAPVPHIKPQPAS) are disordered. The segment covering 641-652 (APVPHIKPQPAS) has biased composition (pro residues).

This sequence in the central section; belongs to the AAA ATPase family. It in the C-terminal section; belongs to the peptidase M41 family. Homohexamer. Requires Zn(2+) as cofactor.

The protein localises to the cell membrane. Acts as a processive, ATP-dependent zinc metallopeptidase for both cytoplasmic and membrane proteins. Plays a role in the quality control of integral membrane proteins. This Thermomicrobium roseum (strain ATCC 27502 / DSM 5159 / P-2) protein is ATP-dependent zinc metalloprotease FtsH 1.